A 764-amino-acid chain; its full sequence is Metabotropic glutamate receptor-like protein H (764 aa).

An N-terminal signal peptide occupies residues 1–20 (MKNILKILILILICINKINC). Residues 21-393 (LDGDGKQFRM…EVEFSQSIQN (373 aa)) are Extracellular-facing. N-linked (GlcNAc...) asparagine glycosylation is found at asparagine 72, asparagine 260, asparagine 278, asparagine 344, and asparagine 379. A helical transmembrane segment spans residues 394–414 (GFSITTGILIGITILMMIGII). The Cytoplasmic segment spans residues 415 to 427 (KYSKTPSMRSASP). The chain crosses the membrane as a helical span at residues 428–448 (IFLNFILAGGIIVYIGIIVWV). At 449–464 (GPMSTHSCNARLWLVT) the chain is on the extracellular side. The helical transmembrane segment at 465 to 485 (LGFSTLIGSLVVKNFRIWLIF) threads the bilayer. The Cytoplasmic portion of the chain corresponds to 486-500 (DNPELKSIKITNYQL). The helical transmembrane segment at 501–521 (FPWVGACLVINIILMAILTSV) threads the bilayer. Over 522-552 (GDLKQIDAMNIDSLGKYEYMKVCKMNSSGAS) the chain is Extracellular. Asparagine 547 carries N-linked (GlcNAc...) asparagine glycosylation. The helical transmembrane segment at 553–573 (TLYTILAYFAALLLVGVFVSW) threads the bilayer. The Cytoplasmic portion of the chain corresponds to 574 to 587 (KIRIVDILEFNESG). The helical transmembrane segment at 588-608 (AIANTLYAISFCLFVIVPLMI) threads the bilayer. Residues 609 to 617 (SPQDMQSET) are Extracellular-facing. The helical transmembrane segment at 618 to 638 (IILCTTGLFITTAALLIIFIP) threads the bilayer. Residues 639–764 (KFWRVFRKGA…IIVNDSENNN (126 aa)) lie on the Cytoplasmic side of the membrane. Positions 664–764 (ATARAESGSK…IIVNDSENNN (101 aa)) are disordered. The span at 671-690 (GSKGSNGNASSGNRTNRRGN) shows a compositional bias: low complexity. The span at 707 to 719 (ENQKEKEKIKDDV) shows a compositional bias: basic and acidic residues. A compositionally biased stretch (acidic residues) spans 731–748 (FTDEASDTDNNEFNDIEL).

The protein in the N-terminal section; belongs to the BMP lipoprotein family. It in the C-terminal section; belongs to the G-protein coupled receptor 3 family. GABA-B receptor subfamily.

It localises to the membrane. The polypeptide is Metabotropic glutamate receptor-like protein H (grlH) (Dictyostelium discoideum (Social amoeba)).